Consider the following 478-residue polypeptide: Alpha-(1,3)-fucosyltransferase FucT (478 aa).

Substrate is bound by residues glycine 94, 186 to 189 (VASN), arginine 195, 222 to 225 (VKNK), asparagine 240, and 246 to 250 (YVTEK). The tract at residues 347–353 (DNPFIFC) is important for acceptor specificity. 10 tandem repeats follow at residues 364 to 370 (DDLRVNY), 371 to 377 (DDLRVNY), 378 to 384 (DDLRINY), 385 to 391 (DDLRVNY), 392 to 398 (DDLRINY), 399 to 405 (DDLRVNY), 406 to 412 (DDLRVNY), 413 to 419 (DDLRINY), 420 to 426 (DDLRVNY), and 427 to 433 (DDLRVNY). Residues 364–433 (DDLRVNYDDL…VNYDDLRVNY (70 aa)) form a 10 X 7 AA tandem repeat of D-D-L-R-[IV]-N-Y region. Residues 434 to 478 (ERLLSKATPLLELSQNTTSKIYRKAYQKSLPLLRAIRRWVKKLGL) are may be involved in membrane binding.

Belongs to the glycosyltransferase 10 family. In terms of assembly, homodimer.

The protein localises to the membrane. It localises to the cytoplasm. The catalysed reaction is a beta-D-galactosyl-(1-&gt;4)-N-acetyl-beta-D-glucosaminyl derivative + GDP-beta-L-fucose = a beta-D-galactosyl-(1-&gt;4)-[alpha-L-fucosyl-(1-&gt;3)]-N-acetyl-beta-D-glucosaminyl derivative + GDP + H(+). Its pathway is lipopolysaccharide biosynthesis; LPS oligosaccharide biosynthesis. Involved in the biosynthesis of the Lewis X (LeX) trisaccharide of the lipopolysaccharide (LPS) O-antigen. Catalyzes the addition of fucose in alpha 1-3 linkage to Gal-beta-1-4-GlcNAc-beta-O-R (LacNAc-R) type II acceptor. This chain is Alpha-(1,3)-fucosyltransferase FucT, found in Helicobacter pylori (Campylobacter pylori).